The chain runs to 335 residues: Protein-arginine kinase (335 aa).

The 224-residue stretch at 20–243 folds into the Phosphagen kinase C-terminal domain; the sequence is IVMSSRIRLA…QQIINEEMQI (224 aa). ATP is bound by residues 23 to 27, histidine 81, arginine 114, 165 to 169, and 196 to 201; these read SSRIR, RASVM, and RGIYGE.

It belongs to the ATP:guanido phosphotransferase family.

It catalyses the reaction L-arginyl-[protein] + ATP = N(omega)-phospho-L-arginyl-[protein] + ADP + H(+). Its function is as follows. Catalyzes the specific phosphorylation of arginine residues in proteins. The sequence is that of Protein-arginine kinase from Staphylococcus haemolyticus (strain JCSC1435).